The sequence spans 482 residues: Chitobiosyldiphosphodolichol beta-mannosyltransferase (482 aa).

Over 1–2 the chain is Lumenal; sequence MA. The helical transmembrane segment at 3-23 threads the bilayer; it reads ASCVALLVLALLLLVLLLGLW. At 24–99 the chain is on the cytoplasmic side; sequence KRGRQTGRAR…DLRGLGAGPR (76 aa). The segment at residues 100–120 is an intramembrane region (helical); that stretch reads ILQYGVKVVFQAVYLLWKMMR. The Cytoplasmic segment spans residues 121-482; the sequence is MDPAAYIFLQ…PCGHPSCRGF (362 aa). Phosphoserine is present on S242.

It belongs to the glycosyltransferase group 1 family. Glycosyltransferase 33 subfamily.

It is found in the endoplasmic reticulum membrane. It catalyses the reaction an N,N'-diacetylchitobiosyl-diphospho-di-trans,poly-cis-dolichol + GDP-alpha-D-mannose = a beta-D-Man-(1-&gt;4)-beta-D-GlcNAc-(1-&gt;4)-alpha-D-GlcNAc-diphospho-di-trans,poly-cis-dolichol + GDP + H(+). It functions in the pathway protein modification; protein glycosylation. In terms of biological role, mannosyltransferase that operates in the biosynthetic pathway of dolichol-linked oligosaccharides, the glycan precursors employed in protein asparagine (N)-glycosylation. The assembly of dolichol-linked oligosaccharides begins on the cytosolic side of the endoplasmic reticulum membrane and finishes in its lumen. The sequential addition of sugars to dolichol pyrophosphate produces dolichol-linked oligosaccharides containing fourteen sugars, including two GlcNAcs, nine mannoses and three glucoses. Once assembled, the oligosaccharide is transferred from the lipid to nascent proteins by oligosaccharyltransferases. Catalyzes, on the cytoplasmic face of the endoplasmic reticulum, the addition of the first mannose residues to the dolichol-linked oligosaccharide chain, to produce Man1GlcNAc(2)-PP-dolichol core oligosaccharide. Man1GlcNAc(2)-PP-dolichol is a substrate for ALG2, the following enzyme in the biosynthetic pathway. This chain is Chitobiosyldiphosphodolichol beta-mannosyltransferase, found in Mus musculus (Mouse).